A 655-amino-acid chain; its full sequence is Very long-chain specific acyl-CoA dehydrogenase, mitochondrial (655 aa).

The transit peptide at 1–40 directs the protein to the mitochondrion; it reads MRAARMAQSTGRQLLRLRGVSSWPGELLGQPRPGPARRPY. The segment at 22-66 is disordered; that stretch reads SWPGELLGQPRPGPARRPYASGVAQAAVDQSDSQPSEASTREKRA. Positions 41-482 are catalytic; it reads ASGVAQAAVD…ALQGCMDKGK (442 aa). Polar residues predominate over residues 49–59; it reads VDQSDSQPSEA. Lys-71 bears the N6-acetyllysine; alternate mark. Residue Lys-71 is modified to N6-succinyllysine; alternate. N6-succinyllysine is present on Lys-195. Residue 214-223 participates in FAD binding; it reads FCLTEPSSGS. Cys-237 bears the S-nitrosocysteine mark. Lys-239 carries the N6-acetyllysine; alternate modification. Position 239 is an N6-succinyllysine; alternate (Lys-239). FAD is bound at residue 249 to 251; it reads WIS. An N6-acetyllysine; alternate mark is found at Lys-276 and Lys-278. N6-succinyllysine; alternate occurs at positions 276 and 278. An N6-acetyllysine modification is found at Lys-298. Position 331 is an N6-acetyllysine; alternate (Lys-331). Lys-331 is subject to N6-succinyllysine; alternate. Lys-372 carries the post-translational modification N6-succinyllysine. Substrate is bound at residue 461–463; sequence FEG. The active-site Proton acceptor is the Glu-462. 464–466 serves as a coordination point for FAD; that stretch reads TND. An N6-acetyllysine; alternate modification is found at Lys-482. At Lys-482 the chain carries N6-succinyllysine; alternate. A membrane-anchoring region spans residues 483–516; the sequence is ELSGLGNALKNPFGNAGLLLGEAGKQLRRRAGLG. Phosphoserine occurs at positions 517 and 522. Lys-550 carries the N6-acetyllysine modification. Lys-556 is subject to N6-acetyllysine; alternate. N6-succinyllysine; alternate is present on Lys-556. Gln-562 provides a ligand contact to FAD. The residue at position 639 (Lys-639) is an N6-succinyllysine.

This sequence belongs to the acyl-CoA dehydrogenase family. In terms of assembly, homodimer. Homodimerizes after import into the mitochondrion. Requires FAD as cofactor. Post-translationally, S-nitrosylation at Cys-237 in liver improves catalytic efficiency.

The protein localises to the mitochondrion inner membrane. The enzyme catalyses a very-long-chain 2,3-saturated fatty acyl-CoA + oxidized [electron-transfer flavoprotein] + H(+) = a very-long-chain (2E)-enoyl-CoA + reduced [electron-transfer flavoprotein]. It carries out the reaction dodecanoyl-CoA + oxidized [electron-transfer flavoprotein] + H(+) = (2E)-dodecenoyl-CoA + reduced [electron-transfer flavoprotein]. The catalysed reaction is tetradecanoyl-CoA + oxidized [electron-transfer flavoprotein] + H(+) = (2E)-tetradecenoyl-CoA + reduced [electron-transfer flavoprotein]. It catalyses the reaction oxidized [electron-transfer flavoprotein] + hexadecanoyl-CoA + H(+) = (2E)-hexadecenoyl-CoA + reduced [electron-transfer flavoprotein]. The enzyme catalyses octadecanoyl-CoA + oxidized [electron-transfer flavoprotein] + H(+) = (2E)-octadecenoyl-CoA + reduced [electron-transfer flavoprotein]. It carries out the reaction eicosanoyl-CoA + oxidized [electron-transfer flavoprotein] + H(+) = (2E)-eicosenoyl-CoA + reduced [electron-transfer flavoprotein]. The catalysed reaction is docosanoyl-CoA + oxidized [electron-transfer flavoprotein] + H(+) = (2E)-docosenoyl-CoA + reduced [electron-transfer flavoprotein]. It catalyses the reaction tetracosanoyl-CoA + oxidized [electron-transfer flavoprotein] + H(+) = (2E)-tetracosenoyl-CoA + reduced [electron-transfer flavoprotein]. It functions in the pathway lipid metabolism; mitochondrial fatty acid beta-oxidation. Functionally, very long-chain specific acyl-CoA dehydrogenase is one of the acyl-CoA dehydrogenases that catalyze the first step of mitochondrial fatty acid beta-oxidation, an aerobic process breaking down fatty acids into acetyl-CoA and allowing the production of energy from fats. The first step of fatty acid beta-oxidation consists in the removal of one hydrogen from C-2 and C-3 of the straight-chain fatty acyl-CoA thioester, resulting in the formation of trans-2-enoyl-CoA. Among the different mitochondrial acyl-CoA dehydrogenases, very long-chain specific acyl-CoA dehydrogenase acts specifically on acyl-CoAs with saturated 12 to 24 carbons long primary chains. The polypeptide is Very long-chain specific acyl-CoA dehydrogenase, mitochondrial (Bos taurus (Bovine)).